The chain runs to 186 residues: MSVADVKKNAEQKMQKSIEALKTDLAKIRTGRAHTGLLDHVQVDYYGSMVPISQVANVTLVDARTIGVQPWEKKMVQAVEKAIREADLGLNPATMGDIIRVPTPALTEERRKELTKVVKGEGEDAKVAVRNLRRDANEQLKKLVKDKAISEDDERRGGDEVQKLTDKFVAEIDKLVAEKDKEIMTV.

Belongs to the RRF family.

It localises to the cytoplasm. Its function is as follows. Responsible for the release of ribosomes from messenger RNA at the termination of protein biosynthesis. May increase the efficiency of translation by recycling ribosomes from one round of translation to another. The protein is Ribosome-recycling factor of Ralstonia pickettii (strain 12J).